Here is a 205-residue protein sequence, read N- to C-terminus: Golgi apparatus membrane protein TVP23 homolog B (205 aa).

At Met-1 the chain carries N-acetylmethionine. Residues 1–21 (MLSQDSNDDTEDVSLFDAEEE) show a composition bias toward acidic residues. The segment at 1–27 (MLSQDSNDDTEDVSLFDAEEETTNRPR) is disordered. A run of 4 helical transmembrane segments spans residues 34 to 53 (PVAS…VYLL), 54 to 72 (CELL…ILLL), 126 to 146 (IFWL…FSAL), and 152 to 172 (KWLA…YGYI).

This sequence belongs to the TVP23 family.

Its subcellular location is the membrane. In Mus musculus (Mouse), this protein is Golgi apparatus membrane protein TVP23 homolog B (Tvp23b).